A 1153-amino-acid polypeptide reads, in one-letter code: Cytosolic carboxypeptidase 1 (1153 aa).

Positions 357 to 400 (NQPPGVDDVVDESDENEATEVDTENDTENEEDDTGHKTQNDDIE) are disordered. Acidic residues predominate over residues 364–389 (DVVDESDENEATEVDTENDTENEEDD). Residues 774–1063 (YPYTYSMLKM…QFCLALLRLR (290 aa)) form the Peptidase M14 domain. Residues H845, E848, and H942 each contribute to the Zn(2+) site. E1027 serves as the catalytic Proton donor/acceptor. Over residues 1108-1128 (AFLEEVDYSAESNDENDPELE) the composition is skewed to acidic residues. The tract at residues 1108–1153 (AFLEEVDYSAESNDENDPELEPDLRDNHALPDPSSDSELSHQDSLT) is disordered. Polar residues predominate over residues 1141-1153 (SSDSELSHQDSLT).

Belongs to the peptidase M14 family. The cofactor is Zn(2+).

It is found in the cytoplasm. The protein resides in the cytosol. It localises to the nucleus. The protein localises to the mitochondrion. It carries out the reaction (L-glutamyl)(n+1)-gamma-L-glutamyl-L-glutamyl-[protein] + H2O = (L-glutamyl)(n)-gamma-L-glutamyl-L-glutamyl-[protein] + L-glutamate. The catalysed reaction is C-terminal L-alpha-aminoacyl-L-glutamyl-L-glutamyl-[tubulin] + H2O = C-terminal L-alpha-aminoacyl-L-glutamyl-[tubulin] + L-glutamate. Functionally, metallocarboxypeptidase that mediates protein deglutamylation of tubulin and non-tubulin target proteins. Catalyzes the removal of polyglutamate side chains present on the gamma-carboxyl group of glutamate residues within the C-terminal tail of alpha- and beta-tubulin. Specifically cleaves tubulin long-side-chains, while it is not able to remove the branching point glutamate. Also catalyzes the removal of polyglutamate residues from the carboxy-terminus of alpha-tubulin as well as non-tubulin proteins. This chain is Cytosolic carboxypeptidase 1 (agtpbp1), found in Danio rerio (Zebrafish).